Reading from the N-terminus, the 430-residue chain is Dihydrolipoyllysine-residue acetyltransferase component of pyruvate dehydrogenase complex (430 aa).

Positions 2 to 77 (AFEFRLPDIG…VVGDVIVKID (76 aa)) constitute a Lipoyl-binding domain. At lysine 43 the chain carries N6-lipoyllysine. The interval 80-122 (DAEDMQFKGHDDDSSSKEEPAKEEAPAEQAPVATQTEEVDENR) is disordered. The segment covering 84 to 104 (MQFKGHDDDSSSKEEPAKEEA) has biased composition (basic and acidic residues). The region spanning 125 to 162 (KAMPSVRKYAREKGVNIKAVSGSGKNGRITKEDVDAYL) is the Peripheral subunit-binding (PSBD) domain. Residues 165-200 (GAPTASNESAASATSEEVAETPAAPAAVTLEGDFPE) are disordered. Positions 166-193 (APTASNESAASATSEEVAETPAAPAAVT) are enriched in low complexity. Residue histidine 401 is part of the active site.

Belongs to the 2-oxoacid dehydrogenase family. In terms of assembly, forms a 24-polypeptide structural core with octahedral symmetry. (R)-lipoate serves as cofactor.

It carries out the reaction N(6)-[(R)-dihydrolipoyl]-L-lysyl-[protein] + acetyl-CoA = N(6)-[(R)-S(8)-acetyldihydrolipoyl]-L-lysyl-[protein] + CoA. Its function is as follows. The pyruvate dehydrogenase complex catalyzes the overall conversion of pyruvate to acetyl-CoA and CO(2). It contains multiple copies of three enzymatic components: pyruvate dehydrogenase (E1), dihydrolipoamide acetyltransferase (E2) and lipoamide dehydrogenase (E3). In Staphylococcus aureus (strain COL), this protein is Dihydrolipoyllysine-residue acetyltransferase component of pyruvate dehydrogenase complex (pdhC).